Here is a 285-residue protein sequence, read N- to C-terminus: Nucleotide-binding protein NTHI1314 (285 aa).

Position 8 to 15 (8 to 15 (GRSGAGKS)) interacts with ATP. A GTP-binding site is contributed by 56-59 (DIRN).

This sequence belongs to the RapZ-like family.

Its function is as follows. Displays ATPase and GTPase activities. In Haemophilus influenzae (strain 86-028NP), this protein is Nucleotide-binding protein NTHI1314.